The sequence spans 126 residues: Fluoride-specific ion channel FluC (126 aa).

2 consecutive transmembrane segments (helical) span residues 2–22 (IKSLFAVIIGGSVGCTLRWLL) and 36–56 (GTLVVNLLAGLIIGTALAYFL). 2 residues coordinate Na(+): Gly75 and Ser78. The next 2 membrane-spanning stretches (helical) occupy residues 80 to 100 (FSTFSVEVFALLQAGNYIWAL) and 105 to 125 (VHVIGSLIMTALGFFIITILF).

It belongs to the fluoride channel Fluc/FEX (TC 1.A.43) family. In terms of assembly, homodimer.

Its subcellular location is the cell inner membrane. It catalyses the reaction fluoride(in) = fluoride(out). Na(+) is not transported, but it plays an essential structural role and its presence is essential for fluoride channel function. In terms of biological role, fluoride-specific ion channel. Important for reducing fluoride concentration in the cell, thus reducing its toxicity. Is highly specific for fluoride ions and cannot transport chloride ions. This Escherichia coli O1:K1 / APEC protein is Fluoride-specific ion channel FluC.